Here is a 399-residue protein sequence, read N- to C-terminus: Sphingosine-1-phosphate phosphatase 2 (399 aa).

The next 4 membrane-spanning stretches (helical) occupy residues 88 to 108 (YLFQ…FLPF), 121 to 141 (LIII…VLKW), 160 to 180 (YGMP…LLIS), and 185 to 205 (YQYP…LVCL). Residues 136 to 144 (KDVLKWPRP) are phosphatase sequence motif I. The tract at residues 163 to 166 (PSTH) is phosphatase sequence motif II. The active-site Proton donor is His166. Positions 206-217 (SRLYTGMHTVLD) are phosphatase sequence motif III. His213 acts as the Nucleophile in catalysis. A run of 5 helical transmembrane segments spans residues 219–239 (LGGV…WTFI), 247–267 (PLFP…YPVS), 280–300 (ILAA…FQLV), 318–338 (TYML…ILLV), and 371–391 (VPYK…FVPM).

It belongs to the type 2 lipid phosphate phosphatase family. As to expression, expressed strongly in kidney and heart, followed by brain, colon, small intestine and lung. Not detected in skeletal muscle, thymus, spleen, liver, placenta, and peripheral blood leukocytes.

It localises to the endoplasmic reticulum membrane. It catalyses the reaction sphinganine 1-phosphate + H2O = sphinganine + phosphate. The catalysed reaction is sphing-4-enine 1-phosphate + H2O = sphing-4-enine + phosphate. It carries out the reaction (4R)-hydroxysphinganine 1-phosphate + H2O = (4R)-hydroxysphinganine + phosphate. Has specific phosphohydrolase activity towards sphingoid base 1-phosphates. Has high phosphohydrolase activity against dihydrosphingosine-1-phosphate and sphingosine-1-phosphate (S1P) in vitro. Sphingosine-1-phosphate phosphatase activity is needed for efficient recycling of sphingosine into the sphingolipid synthesis pathway. May play a role in attenuating intracellular sphingosine 1-phosphate (S1P) signaling. May play a role in pro-inflammatory signaling. Plays a role in the regulation of pancreatic islet beta-cell endoplasmic reticulum stress and proliferation. The protein is Sphingosine-1-phosphate phosphatase 2 of Homo sapiens (Human).